Here is a 209-residue protein sequence, read N- to C-terminus: Uracil phosphoribosyltransferase (209 aa).

Residues Arg-79, Arg-104, and 131–139 each bind 5-phospho-alpha-D-ribose 1-diphosphate; that span reads DPMLATGGS. Uracil is bound by residues Ile-194 and 199 to 201; that span reads GDA. Asp-200 serves as a coordination point for 5-phospho-alpha-D-ribose 1-diphosphate.

This sequence belongs to the UPRTase family. Mg(2+) serves as cofactor.

The catalysed reaction is UMP + diphosphate = 5-phospho-alpha-D-ribose 1-diphosphate + uracil. Its pathway is pyrimidine metabolism; UMP biosynthesis via salvage pathway; UMP from uracil: step 1/1. With respect to regulation, allosterically activated by GTP. Functionally, catalyzes the conversion of uracil and 5-phospho-alpha-D-ribose 1-diphosphate (PRPP) to UMP and diphosphate. The sequence is that of Uracil phosphoribosyltransferase from Brevibacillus brevis (strain 47 / JCM 6285 / NBRC 100599).